Consider the following 359-residue polypeptide: Cytoplasmic tRNA 2-thiolation protein 2 (359 aa).

It belongs to the CTU2/NCS2 family.

Its subcellular location is the cytoplasm. It participates in tRNA modification; 5-methoxycarbonylmethyl-2-thiouridine-tRNA biosynthesis. Its function is as follows. Plays a central role in 2-thiolation of mcm(5)S(2)U at tRNA wobble positions of tRNA(Lys), tRNA(Glu) and tRNA(Gln). May act by forming a heterodimer with NCS6 that ligates sulfur from thiocarboxylated URM1 onto the uridine of tRNAs at wobble position. Prior mcm(5) tRNA modification by the elongator complex is required for 2-thiolation. May also be involved in protein urmylation. The polypeptide is Cytoplasmic tRNA 2-thiolation protein 2 (Ajellomyces capsulatus (strain NAm1 / WU24) (Darling's disease fungus)).